The primary structure comprises 266 residues: Putative zinc finger protein 034R (266 aa).

The disordered stretch occupies residues 84 to 176; sequence SPTKSVDKAA…GPKRDSTQQP (93 aa). Basic and acidic residues predominate over residues 88 to 100; it reads SVDKAAQKEKKMP. Polar residues-rich tracts occupy residues 105-119 and 160-176; these read KPTT…QGIL and GVSQ…TQQP. The C3H1-type zinc-finger motif lies at 180-192; the sequence is CKSVLKQAKCYFG.

The protein belongs to the IIV-6 077L family.

The polypeptide is Putative zinc finger protein 034R (Aedes vexans (Inland floodwater mosquito)).